A 295-amino-acid chain; its full sequence is Phosphoribosylaminoimidazole-succinocarboxamide synthase (295 aa).

The protein belongs to the SAICAR synthetase family.

It carries out the reaction 5-amino-1-(5-phospho-D-ribosyl)imidazole-4-carboxylate + L-aspartate + ATP = (2S)-2-[5-amino-1-(5-phospho-beta-D-ribosyl)imidazole-4-carboxamido]succinate + ADP + phosphate + 2 H(+). It participates in purine metabolism; IMP biosynthesis via de novo pathway; 5-amino-1-(5-phospho-D-ribosyl)imidazole-4-carboxamide from 5-amino-1-(5-phospho-D-ribosyl)imidazole-4-carboxylate: step 1/2. The polypeptide is Phosphoribosylaminoimidazole-succinocarboxamide synthase (Nitrosomonas europaea (strain ATCC 19718 / CIP 103999 / KCTC 2705 / NBRC 14298)).